A 432-amino-acid polypeptide reads, in one-letter code: C-type cytochrome OmcS (432 aa).

The first 25 residues, 1–25, serve as a signal peptide directing secretion; sequence MKKGMKVSLSVAAAALLMSAPAAFA.

The cofactor is heme.

It is found in the cell outer membrane. It localises to the cell surface. In terms of biological role, plays an important role in extracellular electron transfer. Can transfer electrons to insoluble Fe(3+) oxides as well as other extracellular electron acceptors, including Mn(4+) oxide and humic substances. Essential for direct interspecies electron transfer (DIET) in cocultures with G.metallireducens. The protein is C-type cytochrome OmcS of Geobacter sulfurreducens (strain ATCC 51573 / DSM 12127 / PCA).